Reading from the N-terminus, the 382-residue chain is Telomere-binding protein OPG082 (382 aa).

Belongs to the orthopoxvirus OPG082 family.

The protein resides in the virion. In terms of biological role, binds to the hairpin form of the viral telomeric sequence. Might direct genome encapsidation into the virus particle. This is Telomere-binding protein OPG082 (OPG082) from Homo sapiens (Human).